Consider the following 355-residue polypeptide: uncharacterized protein (355 aa).

Residues 1-22 (MRLTHVTACICLLVAVAVLFSG) form the signal peptide.

It belongs to the bacterial solute-binding protein 1 family. WtpA subfamily.

This is an uncharacterized protein from Methanoculleus marisnigri (strain ATCC 35101 / DSM 1498 / JR1).